The following is a 776-amino-acid chain: DNA topoisomerase 1 (776 aa).

Positions 1 to 111 constitute a Toprim domain; it reads MKLVIVESPA…VKSDDFFKRV (111 aa). 2 residues coordinate Mg(2+): Glu-7 and Asp-80. The region spanning 132–568 is the Topo IA-type catalytic domain; that stretch reads DANLVNAQQA…FWSGFNHNIE (437 aa). The interval 166–171 is interaction with DNA; the sequence is SAGRVQ. The active-site O-(5'-phospho-DNA)-tyrosine intermediate is Tyr-304. A C4-type zinc finger spans residues 600 to 627; it reads CPSCKTGELSLKLGKFGAFLACSNYPEC.

The protein belongs to the type IA topoisomerase family. In terms of assembly, monomer. Mg(2+) serves as cofactor.

The enzyme catalyses ATP-independent breakage of single-stranded DNA, followed by passage and rejoining.. Releases the supercoiling and torsional tension of DNA, which is introduced during the DNA replication and transcription, by transiently cleaving and rejoining one strand of the DNA duplex. Introduces a single-strand break via transesterification at a target site in duplex DNA. The scissile phosphodiester is attacked by the catalytic tyrosine of the enzyme, resulting in the formation of a DNA-(5'-phosphotyrosyl)-enzyme intermediate and the expulsion of a 3'-OH DNA strand. The free DNA strand then undergoes passage around the unbroken strand, thus removing DNA supercoils. Finally, in the religation step, the DNA 3'-OH attacks the covalent intermediate to expel the active-site tyrosine and restore the DNA phosphodiester backbone. The chain is DNA topoisomerase 1 from Rickettsia felis (strain ATCC VR-1525 / URRWXCal2) (Rickettsia azadi).